Reading from the N-terminus, the 525-residue chain is GMP synthase [glutamine-hydrolyzing] (525 aa).

In terms of domain architecture, Glutamine amidotransferase type-1 spans 9–207 (RILILDFGSQ…VSDICGCEKQ (199 aa)). Cys-86 acts as the Nucleophile in catalysis. Active-site residues include His-181 and Glu-183. Residues 208 to 400 (WTPAKIIDDA…LGLPYNMLYR (193 aa)) form the GMPS ATP-PPase domain. Residue 235–241 (SGGVDSS) participates in ATP binding.

As to quaternary structure, homodimer.

The enzyme catalyses XMP + L-glutamine + ATP + H2O = GMP + L-glutamate + AMP + diphosphate + 2 H(+). The protein operates within purine metabolism; GMP biosynthesis; GMP from XMP (L-Gln route): step 1/1. Catalyzes the synthesis of GMP from XMP. This chain is GMP synthase [glutamine-hydrolyzing], found in Idiomarina loihiensis (strain ATCC BAA-735 / DSM 15497 / L2-TR).